Consider the following 357-residue polypeptide: G-protein coupled receptor 183 (357 aa).

Residues 1 to 32 lie on the Extracellular side of the membrane; the sequence is MANNFTTPLAASHGNNCDLYAHHSTARILMPL. Residue asparagine 4 is glycosylated (N-linked (GlcNAc...) asparagine). The helical transmembrane segment at 33 to 53 threads the bilayer; sequence HYSLVFIIGLVGNLLALVVIV. At 54 to 68 the chain is on the cytoplasmic side; sequence QNRKKINSTTLYSMN. Residues 69 to 89 form a helical membrane-spanning segment; sequence LVISDILFTTALPTRIVYYAL. 7alpha,25-dihydroxycholesterol is bound at residue arginine 83. The Extracellular portion of the chain corresponds to 90-101; the sequence is GFDWRIGDALCR. Cysteine 100 and cysteine 177 are joined by a disulfide. A helical transmembrane segment spans residues 102 to 122; the sequence is ITALLFYINTYAGVNFMTCLS. Residues tyrosine 108 and tyrosine 112 each coordinate 7alpha,25-dihydroxycholesterol. The segment at 122-130 is interaction with G proteins; the sequence is SIDRFFAVV. Residues 123–143 are Cytoplasmic-facing; sequence IDRFFAVVHPLRYNKIKRIEY. A helical membrane pass occupies residues 144–164; that stretch reads AKGICVFVWILVFAQTLPLLL. The Extracellular segment spans residues 165–190; it reads KPMSKQEADKTTCMEYPNFEGTASLP. The chain crosses the membrane as a helical span at residues 191–211; it reads WILLGACLLGYVLPLAIILLC. Over 212 to 240 the chain is Cytoplasmic; the sequence is YSQICCKLFRTAKQNPLTEKSGVNKKALN. Residues 241-261 form a helical membrane-spanning segment; the sequence is TIILIIGVFVLCFTPYHVAIM. Tyrosine 256 contributes to the 7alpha,25-dihydroxycholesterol binding site. At 262-287 the chain is on the extracellular side; that stretch reads QHMVKTLYAPGALGCGVRHSFQISLH. Residues 288–308 traverse the membrane as a helical segment; the sequence is FTVCLMNFNCCMDPFIYFFAC. Over 309–357 the chain is Cytoplasmic; that stretch reads KGYKRKVMKMLKRQVSVSISSAVRSAPEENSREMTESQMMIHSKASNGR. A phosphoserine mark is found at serine 324 and serine 345. The segment at 336–357 is disordered; sequence EENSREMTESQMMIHSKASNGR. Polar residues predominate over residues 344–357; the sequence is ESQMMIHSKASNGR.

This sequence belongs to the G-protein coupled receptor 1 family. As to quaternary structure, homodimer and heterodimer. Heterodimerizes with CXCR5; leading to modulate the interaction between of CXCL13 and CXCR5.

It localises to the cell membrane. G-protein coupled receptor expressed in lymphocytes that acts as a chemotactic receptor for B-cells, T-cells, splenic dendritic cells, monocytes/macrophages and astrocytes. Receptor for oxysterol 7-alpha,25-dihydroxycholesterol (7-alpha,25-OHC) and other related oxysterols. Mediates cell positioning and movement of a number of cells by binding the 7-alpha,25-OHC ligand that forms a chemotactic gradient. Binding of 7-alpha,25-OHC mediates the correct localization of B-cells during humoral immune responses. Guides B-cell movement along the B-cell zone-T-cell zone boundary and later to interfollicular and outer follicular regions. Its specific expression during B-cell maturation helps position B-cells appropriately for mounting T-dependent antibody responses. Collaborates with CXCR5 to mediate B-cell migration; probably by forming a heterodimer with CXCR5 that affects the interaction between of CXCL13 and CXCR5. Also acts as a chemotactic receptor for some T-cells upon binding to 7-alpha,25-OHC ligand. Promotes follicular helper T (Tfh) cells differentiation by positioning activated T-cells at the follicle-T-zone interface, promoting contact of newly activated CD4 T-cells with activated dendritic cells and exposing them to Tfh-cell-promoting inducible costimulator (ICOS) ligand. Expression in splenic dendritic cells is required for their homeostasis, localization and ability to induce B- and T-cell responses: GPR183 acts as a chemotactic receptor in dendritic cells that mediates the accumulation of CD4(+) dendritic cells in bridging channels. Regulates migration of astrocytes and is involved in communication between astrocytes and macrophages. Promotes osteoclast precursor migration to bone surfaces. Signals constitutively through G(i)-alpha, but not G(s)-alpha or G(q)-alpha. Signals constitutively also via MAPK1/3 (ERK1/2). The protein is G-protein coupled receptor 183 (Gpr183) of Rattus norvegicus (Rat).